The chain runs to 391 residues: Large envelope protein (391 aa).

The residue at position 1 (M1) is an N-acetylmethionine. G2 carries the N-myristoyl glycine; by host lipid modification. The pre-S1 stretch occupies residues 2–108 (GLNQSTFNPL…PPLRDTHPQA (107 aa)). A pre-S region spans residues 2-163 (GLNQSTFNPL…FSTTGVPVST (162 aa)). Topologically, residues 2-170 (GLNQSTFNPL…VSTMDITSSG (169 aa)) are virion surface; in external conformation. At 2–242 (GLNQSTFNPL…PGYRWMCLRR (241 aa)) the chain is on the intravirion; in internal conformation side. Residues 73–107 (LSVTVPDTPPPPSTNRDKGRKPTPATPPLRDTHPQ) form a disordered region. The interval 109 to 163 (MTWNTSSFQSYLQNPKVRGLYFPAGGSTSSIVNPVPTTASTTSSSFSTTGVPVST) is pre-S2. The chain crosses the membrane as a helical span at residues 171–191 (FLGPLLALQAVFFLLTKILTM). The Intravirion; in external conformation portion of the chain corresponds to 192–242 (PQSLDSLWTSLNFLGGTPACPGLNSQSPTSSHSPTCCPPTCPGYRWMCLRR). A helical membrane pass occupies residues 243-263 (SIIFLFILLLCLIFLLVLLDY). The Virion surface segment spans residues 264–339 (QGMLPVCPLL…WALARFSWLN (76 aa)). Residue N311 is glycosylated (N-linked (GlcNAc...) asparagine; by host). The chain crosses the membrane as a helical span at residues 340 to 360 (SLLPFVQWFAGLSPTVWLLVI). Residues 361–366 (WMMWFW) are Intravirion-facing. Residues 367–389 (GPSLFSILSPFLPLLPLFFWLWA) traverse the membrane as a helical segment. Residues 390–391 (YI) are Virion surface-facing.

Belongs to the orthohepadnavirus major surface antigen family. In its internal form (Li-HBsAg), interacts with the capsid protein and with the isoform S. Interacts with host chaperone CANX. In terms of assembly, associates with host chaperone CANX through its pre-S2 N glycan; this association may be essential for isoform M proper secretion. As to quaternary structure, interacts with isoform L. Interacts with the antigens of satellite virus HDV (HDVAgs); this interaction is required for encapsidation of HDV genomic RNA. Isoform M is N-terminally acetylated by host at a ratio of 90%, and N-glycosylated by host at the pre-S2 region. In terms of processing, myristoylated.

It is found in the virion membrane. The large envelope protein exists in two topological conformations, one which is termed 'external' or Le-HBsAg and the other 'internal' or Li-HBsAg. In its external conformation the protein attaches the virus to cell receptors and thereby initiating infection. This interaction determines the species specificity and liver tropism. This attachment induces virion internalization predominantly through caveolin-mediated endocytosis. The large envelope protein also assures fusion between virion membrane and endosomal membrane. In its internal conformation the protein plays a role in virion morphogenesis and mediates the contact with the nucleocapsid like a matrix protein. In terms of biological role, the middle envelope protein plays an important role in the budding of the virion. It is involved in the induction of budding in a nucleocapsid independent way. In this process the majority of envelope proteins bud to form subviral lipoprotein particles of 22 nm of diameter that do not contain a nucleocapsid. The chain is Large envelope protein from Woolly monkey hepatitis B virus (isolate Louisville) (WMHBV).